Here is a 321-residue protein sequence, read N- to C-terminus: uncharacterized protein (321 aa).

A disordered region spans residues 157–220 (TLEQPIEEDF…EGAEEDSHEH (64 aa)). Residues 161–214 (PIEEDFDEQDENDQNERDEDDAEEQEEDEVEEEEEEQQEEEEGENDEELTEGAE) are compositionally biased toward acidic residues. A coiled-coil region spans residues 167 to 212 (DEQDENDQNERDEDDAEEQEEDEVEEEEEEQQEEEEGENDEELTEG).

This is an uncharacterized protein from Dictyostelium discoideum (Social amoeba).